The primary structure comprises 123 residues: MATLANLTQTLEDAFKKIFITYMDSWRRNTTAEEQALQARVDAENFYYVILYLMVMIGMFSFIVVAILVSTVKSKRREHSQHPYHQYIVEDWQEKYKSQILHLEDSKATIHENMGATGFTVSP.

N-linked (GlcNAc...) asparagine glycosylation is found at N6 and N29. Residues 49 to 69 (VILYLMVMIGMFSFIVVAILV) traverse the membrane as a helical segment. Topologically, residues 70–123 (STVKSKRREHSQHPYHQYIVEDWQEKYKSQILHLEDSKATIHENMGATGFTVSP) are cytoplasmic.

The protein belongs to the potassium channel KCNE family. As to quaternary structure, interacts with KCNB1. Associates with KCNH2/ERG1. May associate with KCNQ2 and KCNQ3. Associates with HCN1 and probably HCN2. Heteromultimer with KCNC2. Interacts with KCNC2. Interacts with KCNQ1. Forms a heterooligomer complex with KCNQ1 that targets to the membrane raft and leading to currents with an apparently instantaneous activation, a rapid deactivation process and a linear current-voltage relationship and decreases the amplitude of the outward current.

It is found in the cell membrane. The protein localises to the apical cell membrane. Its function is as follows. Ancillary protein that functions as a regulatory subunit of the voltage-gated potassium (Kv) channel complex composed of pore-forming and potassium-conducting alpha subunits and of regulatory beta subunits. KCNE2 beta subunit modulates the gating kinetics and enhances stability of the channel complex. Alters the gating of the delayed rectifier Kv channel containing KCNB1 alpha subunit. Associates with KCNH2/HERG alpha subunit Kv channel to form the rapidly activating component of the delayed rectifying potassium current (IKr) in heart. May associate with KCNQ2 and/or KCNQ3 alpha subunits to modulate the native M-type current. May associate with HCN1 and HCN2 channel subunits to increase potassium current. Forms a heterooligomer complex with KCNQ1/KVLQT1 alpha subunits which leads to currents with an apparently instantaneous activation, a rapid deactivation process and a linear current-voltage relationship and decreases the amplitude of the outward current. KCNQ1-KCNE2 channel associates with Na(+)-coupled myo-inositol symporter in the apical membrane of choroid plexus epithelium and regulates the myo-inositol gradient between blood and cerebrospinal fluid with an impact on neuron excitability. The sequence is that of Potassium voltage-gated channel subfamily E member 2 from Mus musculus (Mouse).